Consider the following 146-residue polypeptide: Hemoglobin subunit beta (146 aa).

N-acetylvaline is present on Val1. A Globin domain is found at 2 to 146 (HLTAEEKSLV…VANALAHKYH (145 aa)). Ser44 bears the Phosphoserine mark. Lys59 is subject to N6-acetyllysine. His63 is a binding site for heme b. The residue at position 82 (Lys82) is an N6-acetyllysine. His92 is a heme b binding site. S-nitrosocysteine is present on Cys93. Lys144 carries the N6-acetyllysine modification.

This sequence belongs to the globin family. In terms of assembly, heterotetramer of two alpha chains and two beta chains. In terms of tissue distribution, red blood cells.

In terms of biological role, involved in oxygen transport from the lung to the various peripheral tissues. The protein is Hemoglobin subunit beta (HBB) of Canis latrans (Coyote).